Consider the following 186-residue polypeptide: Small ribosomal subunit protein uS5 (186 aa).

The S5 DRBM domain maps to 20–83 (FVDKLVHINR…EAAKRDMIFV (64 aa)).

It belongs to the universal ribosomal protein uS5 family. Part of the 30S ribosomal subunit. Contacts proteins S4 and S8.

In terms of biological role, with S4 and S12 plays an important role in translational accuracy. Its function is as follows. Located at the back of the 30S subunit body where it stabilizes the conformation of the head with respect to the body. This chain is Small ribosomal subunit protein uS5, found in Brucella anthropi (strain ATCC 49188 / DSM 6882 / CCUG 24695 / JCM 21032 / LMG 3331 / NBRC 15819 / NCTC 12168 / Alc 37) (Ochrobactrum anthropi).